A 289-amino-acid polypeptide reads, in one-letter code: Probable vesicular-fusion protein sec17 homolog (289 aa).

Ser-76 is modified (phosphoserine).

It belongs to the SNAP family.

It localises to the membrane. Functionally, required for vesicular transport between the endoplasmic reticulum and the Golgi apparatus. This is Probable vesicular-fusion protein sec17 homolog (sec17) from Schizosaccharomyces pombe (strain 972 / ATCC 24843) (Fission yeast).